The chain runs to 231 residues: MEKVKLKEIFNNIYELKSDDGLKRIATKSLVPSKRIYGEKLITGEDNLEYRIWNPNRSKLGAAIVNGLKTMPIKKGSKVLYLGVSAGTTPSHVADITENSPVYSVEFAPRIMREFLDVSKDRKNLIPILGDATNPVEYSNVVEEVDVIFEDVAQPKQAEILVNNAKWFLKEGGYGMISIKARSVDVLRNPKEIFEEQKQILIEGGFEIVDEVNIEPFEKDHILFVGIWNKQ.

Residues 88-89, 106-107, 131-132, and 151-154 each bind S-adenosyl-L-methionine; these read TT, EF, DA, and DVAQ.

Belongs to the methyltransferase superfamily. Fibrillarin family. Interacts with nop5. Component of box C/D small ribonucleoprotein (sRNP) particles that contain rpl7ae, FlpA and nop5, plus a guide RNA.

In terms of biological role, involved in pre-rRNA and tRNA processing. Utilizes the methyl donor S-adenosyl-L-methionine to catalyze the site-specific 2'-hydroxyl methylation of ribose moieties in rRNA and tRNA. Site specificity is provided by a guide RNA that base pairs with the substrate. Methylation occurs at a characteristic distance from the sequence involved in base pairing with the guide RNA. The polypeptide is Fibrillarin-like rRNA/tRNA 2'-O-methyltransferase (Methanococcus aeolicus (strain ATCC BAA-1280 / DSM 17508 / OCM 812 / Nankai-3)).